The following is a 212-amino-acid chain: Stem bromelain (212 aa).

2 disulfides stabilise this stretch: C23–C63 and C57–C96. Residue C26 is part of the active site. N-linked (GlcNAc...) asparagine glycosylation occurs at N117. C152 and C199 are oxidised to a cystine. The active site involves H158.

This sequence belongs to the peptidase C1 family.

The enzyme catalyses Broad specificity for cleavage of proteins, but strong preference for Z-Arg-Arg-|-NHMec among small molecule substrates.. Functionally, cysteine proteinase with a high level of diversity in substrate specificity. This Ananas comosus (Pineapple) protein is Stem bromelain.